A 477-amino-acid polypeptide reads, in one-letter code: Regulatory protein HrpB (477 aa).

The region spanning 375 to 477 (RRAYRYIIEN…NEAPSETIWR (103 aa)) is the HTH araC/xylS-type domain. 2 DNA-binding regions (H-T-H motif) span residues 393-414 (REVA…KSAV) and 444-467 (IIDT…RKQF).

Positive regulation of hypersensitive response genes involved in plant pathogenicity and partly of its own synthesis in minimal medium. The polypeptide is Regulatory protein HrpB (hrpB) (Ralstonia nicotianae (strain ATCC BAA-1114 / GMI1000) (Ralstonia solanacearum)).